We begin with the raw amino-acid sequence, 344 residues long: uncharacterized protein (344 aa).

This is an uncharacterized protein from Aquifex aeolicus (strain VF5).